Consider the following 520-residue polypeptide: Cyclin-L2 (520 aa).

The residue at position 2 (Ala-2) is an N-acetylalanine. Cyclin-like stretches follow at residues 83 to 185 (ELIQ…RVLK) and 198 to 282 (KIIV…KILQ). The disordered stretch occupies residues 316–520 (LPGGTQVLDG…DHPGHSRHRR (205 aa)). Ser-330, Ser-338, Ser-348, and Ser-351 each carry phosphoserine. Residues 357–367 (RRLEGAKKAKA) are compositionally biased toward basic and acidic residues. At Ser-369 the chain carries Phosphoserine. Basic and acidic residues predominate over residues 376 to 390 (KGRESRSRSRSREQS). The segment at 385-423 (RSREQSYSRSPSRSASPKRRKSDSGSTSGGSKSQSRSRS) is RS. The segment covering 408–436 (SGSTSGGSKSQSRSRSRSDSPPRQAPRSA) has biased composition (low complexity). Basic and acidic residues predominate over residues 441-454 (SEIRGSRKSKDCKY). A compositionally biased stretch (basic residues) spans 456 to 471 (QKPHKSRSRSSSRSRS). Composition is skewed to basic and acidic residues over residues 472–481 (RSRERADNPG) and 489–514 (YYRD…DHPG).

It belongs to the cyclin family. Cyclin L subfamily. As to quaternary structure, interacts with CDK11A, CDK11B, CDK12, CDK13 and POLR2A, the hyperphosphorylated C-terminal domain (CTD) of RNA polymerase II. May form a ternary complex with CDK11B and casein kinase II (CKII). Interacts with pre-mRNA-splicing factors, including at least SRSF1, SRSF2 AND SRSF7/SLU7. In terms of tissue distribution, widely expressed.

The protein resides in the nucleus speckle. Its subcellular location is the nucleus. The protein localises to the nucleoplasm. Its function is as follows. Involved in pre-mRNA splicing. May induce cell death, possibly by acting on the transcription and RNA processing of apoptosis-related factors. The polypeptide is Cyclin-L2 (CCNL2) (Homo sapiens (Human)).